We begin with the raw amino-acid sequence, 90 residues long: MAVKIRLTRMGSKKKPFYRINVADSRAPRDGRFIETVGTYNPLVAENQVTLKEDRVLDWLGKGAQPSDTVRSLLSKAGVMAKFHDQKFSK.

This sequence belongs to the bacterial ribosomal protein bS16 family.

This is Small ribosomal subunit protein bS16 from Streptococcus equi subsp. zooepidemicus (strain H70).